Here is a 415-residue protein sequence, read N- to C-terminus: ORC1-type DNA replication protein 2 (415 aa).

ATP contacts are provided by residues 69–73 (TGKSV), tyrosine 215, and arginine 227.

It belongs to the CDC6/cdc18 family.

Its function is as follows. Involved in regulation of DNA replication. The polypeptide is ORC1-type DNA replication protein 2 (cdc6-2) (Sulfolobus acidocaldarius (strain ATCC 33909 / DSM 639 / JCM 8929 / NBRC 15157 / NCIMB 11770)).